Consider the following 356-residue polypeptide: Protein pelota homolog (356 aa).

Belongs to the eukaryotic release factor 1 family. Pelota subfamily. As to quaternary structure, monomer. The cofactor is a divalent metal cation.

It is found in the cytoplasm. In terms of biological role, may function in recognizing stalled ribosomes, interact with stem-loop structures in stalled mRNA molecules, and effect endonucleolytic cleavage of the mRNA. May play a role in the release non-functional ribosomes and degradation of damaged mRNAs. Has endoribonuclease activity. The sequence is that of Protein pelota homolog from Desulfurococcus amylolyticus (strain DSM 18924 / JCM 16383 / VKM B-2413 / 1221n) (Desulfurococcus kamchatkensis).